Here is a 149-residue protein sequence, read N- to C-terminus: Large ribosomal subunit protein bL9 (149 aa).

This sequence belongs to the bacterial ribosomal protein bL9 family.

In terms of biological role, binds to the 23S rRNA. This chain is Large ribosomal subunit protein bL9, found in Xylella fastidiosa (strain M23).